The chain runs to 121 residues: Large ribosomal subunit protein uL14 (121 aa).

Belongs to the universal ribosomal protein uL14 family. Part of the 50S ribosomal subunit. Forms a cluster with proteins L3 and L19. In the 70S ribosome, L14 and L19 interact and together make contacts with the 16S rRNA in bridges B5 and B8.

Functionally, binds to 23S rRNA. Forms part of two intersubunit bridges in the 70S ribosome. This Aquifex aeolicus (strain VF5) protein is Large ribosomal subunit protein uL14.